Consider the following 344-residue polypeptide: Mitochondrial genome maintenance exonuclease 1 (344 aa).

Active-site residues include aspartate 238, aspartate 251, and lysine 253. Serine 343 is subject to Phosphoserine.

Belongs to the MGME1 family.

It is found in the mitochondrion. Its function is as follows. Metal-dependent single-stranded DNA (ssDNA) exonuclease involved in mitochondrial genome maintenance. Has preference for 5'-3' exonuclease activity but is also capable of endonuclease activity on linear substrates. Necessary for maintenance of proper 7S DNA levels. Probably involved in mitochondrial DNA (mtDNA) repair, possibly via the processing of displaced DNA containing Okazaki fragments during RNA-primed DNA synthesis on the lagging strand or via processing of DNA flaps during long-patch base excision repair. Specifically binds 5-hydroxymethylcytosine (5hmC)-containing DNA in stem cells. This Homo sapiens (Human) protein is Mitochondrial genome maintenance exonuclease 1.